A 547-amino-acid chain; its full sequence is Chaperonin GroEL (547 aa).

ATP is bound by residues 30–33, Lys51, 87–91, Gly415, 479–481, and Asp495; these read TLGP, DGTTT, and NAA. Residues 526–547 form a disordered region; it reads KKDEPTPPAAGGGMGGMGGMDF. The segment covering 535–547 has biased composition (gly residues); that stretch reads AGGGMGGMGGMDF.

The protein belongs to the chaperonin (HSP60) family. As to quaternary structure, forms a cylinder of 14 subunits composed of two heptameric rings stacked back-to-back. Interacts with the co-chaperonin GroES.

The protein localises to the cytoplasm. It catalyses the reaction ATP + H2O + a folded polypeptide = ADP + phosphate + an unfolded polypeptide.. In terms of biological role, together with its co-chaperonin GroES, plays an essential role in assisting protein folding. The GroEL-GroES system forms a nano-cage that allows encapsulation of the non-native substrate proteins and provides a physical environment optimized to promote and accelerate protein folding. This chain is Chaperonin GroEL, found in Xylella fastidiosa (strain M12).